A 421-amino-acid polypeptide reads, in one-letter code: UDP-N-acetylglucosamine 1-carboxyvinyltransferase (421 aa).

Phosphoenolpyruvate is bound at residue 22-23 (KN). Arg94 contributes to the UDP-N-acetyl-alpha-D-glucosamine binding site. Residue Cys118 is the Proton donor of the active site. Cys118 is subject to 2-(S-cysteinyl)pyruvic acid O-phosphothioketal. Residues 163 to 166 (KVSV), Asp308, and Ile330 contribute to the UDP-N-acetyl-alpha-D-glucosamine site.

Belongs to the EPSP synthase family. MurA subfamily.

It localises to the cytoplasm. The enzyme catalyses phosphoenolpyruvate + UDP-N-acetyl-alpha-D-glucosamine = UDP-N-acetyl-3-O-(1-carboxyvinyl)-alpha-D-glucosamine + phosphate. Its pathway is cell wall biogenesis; peptidoglycan biosynthesis. Its function is as follows. Cell wall formation. Adds enolpyruvyl to UDP-N-acetylglucosamine. The protein is UDP-N-acetylglucosamine 1-carboxyvinyltransferase of Orientia tsutsugamushi (strain Boryong) (Rickettsia tsutsugamushi).